We begin with the raw amino-acid sequence, 206 residues long: uncharacterized protein (206 aa).

Disordered regions lie at residues Arg-38–Ala-88 and His-160–Glu-206. The span at Gln-40–Leu-73 shows a compositional bias: low complexity. Ser-68 is modified (phosphoserine). The span at Thr-78–Ala-88 shows a compositional bias: polar residues. Residues Ser-165–Ser-186 are compositionally biased toward low complexity. The span at Pro-192–Glu-206 shows a compositional bias: polar residues.

The protein resides in the cytoplasm. This is an uncharacterized protein from Saccharomyces cerevisiae (strain ATCC 204508 / S288c) (Baker's yeast).